The sequence spans 321 residues: Aspartate carbamoyltransferase catalytic subunit (321 aa).

The carbamoyl phosphate site is built by R70 and T71. An L-aspartate-binding site is contributed by K98. Positions 120, 148, and 151 each coordinate carbamoyl phosphate. Positions 181 and 235 each coordinate L-aspartate. Carbamoyl phosphate contacts are provided by G276 and P277.

The protein belongs to the aspartate/ornithine carbamoyltransferase superfamily. ATCase family. Heterododecamer (2C3:3R2) of six catalytic PyrB chains organized as two trimers (C3), and six regulatory PyrI chains organized as three dimers (R2).

It catalyses the reaction carbamoyl phosphate + L-aspartate = N-carbamoyl-L-aspartate + phosphate + H(+). It participates in pyrimidine metabolism; UMP biosynthesis via de novo pathway; (S)-dihydroorotate from bicarbonate: step 2/3. Functionally, catalyzes the condensation of carbamoyl phosphate and aspartate to form carbamoyl aspartate and inorganic phosphate, the committed step in the de novo pyrimidine nucleotide biosynthesis pathway. The polypeptide is Aspartate carbamoyltransferase catalytic subunit (Gluconacetobacter diazotrophicus (strain ATCC 49037 / DSM 5601 / CCUG 37298 / CIP 103539 / LMG 7603 / PAl5)).